A 502-amino-acid chain; its full sequence is ATP synthase subunit alpha, chloroplastic (502 aa).

170 to 177 (GDRQTGKT) contacts ATP.

It belongs to the ATPase alpha/beta chains family. As to quaternary structure, F-type ATPases have 2 components, CF(1) - the catalytic core - and CF(0) - the membrane proton channel. CF(1) has five subunits: alpha(3), beta(3), gamma(1), delta(1), epsilon(1). CF(0) has four main subunits: a, b, b' and c.

The protein localises to the plastid. The protein resides in the chloroplast thylakoid membrane. It carries out the reaction ATP + H2O + 4 H(+)(in) = ADP + phosphate + 5 H(+)(out). Its function is as follows. Produces ATP from ADP in the presence of a proton gradient across the membrane. The alpha chain is a regulatory subunit. This chain is ATP synthase subunit alpha, chloroplastic, found in Tupiella akineta (Green alga).